A 527-amino-acid polypeptide reads, in one-letter code: TnpB-like protein R854 (527 aa).

Basic residues predominate over residues 21–36; sequence GSKTKKKVFVKKKPPA. A disordered region spans residues 21-50; the sequence is GSKTKKKVFVKKKPPAKKPPDKKPLKKTTK. Zn(2+) contacts are provided by cysteine 481, cysteine 484, cysteine 498, and cysteine 501.

In the central section; belongs to the transposase 2 family. It in the C-terminal section; belongs to the transposase 35 family.

The sequence is that of TnpB-like protein R854 from Acanthamoeba polyphaga mimivirus (APMV).